Consider the following 488-residue polypeptide: Putative BTB/POZ domain-containing protein L674 (488 aa).

Residues 83–150 (NIVYFNIGGK…VKNQKCPINN (68 aa)) enclose the BTB domain.

This sequence belongs to the mimivirus BTB/WD family.

The sequence is that of Putative BTB/POZ domain-containing protein L674 from Acanthamoeba polyphaga (Amoeba).